A 70-amino-acid polypeptide reads, in one-letter code: Insulin (70 aa).

Intrachain disulfides connect Cys7-Cys56, Cys19-Cys69, and Cys55-Cys60. The propeptide at 33 to 49 is c peptide; sequence FVDSLAGYSKHQNGGIS.

The protein belongs to the insulin family. In terms of assembly, heterodimer of a B chain and an A chain linked by two disulfide bonds.

Its subcellular location is the secreted. In terms of biological role, insulin decreases blood glucose concentration. It increases cell permeability to monosaccharides, amino acids and fatty acids. It accelerates glycolysis, the pentose phosphate cycle, and glycogen synthesis in liver. In Torpedo marmorata (Marbled electric ray), this protein is Insulin (ins).